Here is a 701-residue protein sequence, read N- to C-terminus: Ribosomal RNA large subunit methyltransferase K/L (701 aa).

The THUMP domain maps to 43–154; the sequence is LLYQSLMWSR…KETAHISLDL (112 aa).

Belongs to the methyltransferase superfamily. RlmKL family.

It localises to the cytoplasm. It catalyses the reaction guanosine(2445) in 23S rRNA + S-adenosyl-L-methionine = N(2)-methylguanosine(2445) in 23S rRNA + S-adenosyl-L-homocysteine + H(+). It carries out the reaction guanosine(2069) in 23S rRNA + S-adenosyl-L-methionine = N(2)-methylguanosine(2069) in 23S rRNA + S-adenosyl-L-homocysteine + H(+). Functionally, specifically methylates the guanine in position 2445 (m2G2445) and the guanine in position 2069 (m7G2069) of 23S rRNA. This Klebsiella pneumoniae subsp. pneumoniae (strain ATCC 700721 / MGH 78578) protein is Ribosomal RNA large subunit methyltransferase K/L.